The following is a 253-amino-acid chain: Triosephosphate isomerase (253 aa).

8 to 10 (NWK) contributes to the substrate binding site. Residue H93 is the Electrophile of the active site. E165 serves as the catalytic Proton acceptor. Substrate contacts are provided by residues G171, S210, and 231–232 (GG).

The protein belongs to the triosephosphate isomerase family. As to quaternary structure, homodimer.

Its subcellular location is the cytoplasm. It carries out the reaction D-glyceraldehyde 3-phosphate = dihydroxyacetone phosphate. Its pathway is carbohydrate biosynthesis; gluconeogenesis. The protein operates within carbohydrate degradation; glycolysis; D-glyceraldehyde 3-phosphate from glycerone phosphate: step 1/1. In terms of biological role, involved in the gluconeogenesis. Catalyzes stereospecifically the conversion of dihydroxyacetone phosphate (DHAP) to D-glyceraldehyde-3-phosphate (G3P). The polypeptide is Triosephosphate isomerase (Francisella tularensis subsp. holarctica (strain FTNF002-00 / FTA)).